The following is a 136-amino-acid chain: Phosphoribosyl-AMP cyclohydrolase (136 aa).

Asp-92 serves as a coordination point for Mg(2+). Position 93 (Cys-93) interacts with Zn(2+). Residues Asp-94 and Asp-96 each contribute to the Mg(2+) site. Zn(2+)-binding residues include Cys-109 and Cys-116.

It belongs to the PRA-CH family. In terms of assembly, homodimer. Mg(2+) is required as a cofactor. It depends on Zn(2+) as a cofactor.

The protein resides in the cytoplasm. It catalyses the reaction 1-(5-phospho-beta-D-ribosyl)-5'-AMP + H2O = 1-(5-phospho-beta-D-ribosyl)-5-[(5-phospho-beta-D-ribosylamino)methylideneamino]imidazole-4-carboxamide. The protein operates within amino-acid biosynthesis; L-histidine biosynthesis; L-histidine from 5-phospho-alpha-D-ribose 1-diphosphate: step 3/9. Reversibly inhibited by EDTA and free zinc ions. Enzyme is inactivated by dialysis against 1,10-phenanthroline, which is a zinc specific chelator. Its function is as follows. Catalyzes the hydrolysis of the adenine ring of phosphoribosyl-AMP. This chain is Phosphoribosyl-AMP cyclohydrolase, found in Methanococcus vannielii.